A 218-amino-acid chain; its full sequence is Ropporin-1-like protein (218 aa).

Residues 17–54 enclose the RIIa domain; that stretch reads PELPDILKQFTKAAIRTQPADVLQWSAGYFSALSRGDP.

It belongs to the ropporin family. Component of the axonemal radial spoke complex 1 (RS1), at least composed of spoke head proteins RSPH1, RSPH3, RSPH9 and the cilia-specific component RSPH4A or sperm-specific component RSPH6A, spoke stalk proteins RSPH14, DNAJB13, DYDC1, ROPN1L and NME5, and the anchor protein IQUB. May interact with AKAP3. Interacts with FSCB; the interaction increases upon spermatozoa capacitation conditions. Interacts with CFAP61. Sumoylated, sumoylation decreases upon spermatozoa capacitation conditions. Testis-specific. Expression is restricted to germ cells.

Its subcellular location is the cell projection. It is found in the cilium. The protein resides in the flagellum. Its function is as follows. Functions as part of axonemal radial spoke complexes that play an important part in the motility of sperm and cilia. Important for male fertility. With ROPN1, involved in fibrous sheath integrity and sperm motility, plays a role in PKA-dependent signaling processes required for spermatozoa capacitation. The polypeptide is Ropporin-1-like protein (Ropn1l) (Mus musculus (Mouse)).